Reading from the N-terminus, the 648-residue chain is Biosynthetic arginine decarboxylase (648 aa).

Lys-109 is modified (N6-(pyridoxal phosphate)lysine). 291–301 contacts substrate; that stretch reads IDVGGGLGIDF.

This sequence belongs to the Orn/Lys/Arg decarboxylase class-II family. SpeA subfamily. Mg(2+) is required as a cofactor. The cofactor is pyridoxal 5'-phosphate.

The catalysed reaction is L-arginine + H(+) = agmatine + CO2. Functionally, catalyzes the biosynthesis of agmatine from arginine. This is Biosynthetic arginine decarboxylase from Prochlorococcus marinus subsp. pastoris (strain CCMP1986 / NIES-2087 / MED4).